A 324-amino-acid polypeptide reads, in one-letter code: Lactonase drp35 (324 aa).

Residues Glu47, Ser109, Gly111, Asp129, Thr132, Tyr134, Asp137, Asn184, Asp235, and Ser236 each contribute to the Ca(2+) site. Asp235 (proton donor) is an active-site residue.

It belongs to the SMP-30/CGR1 family. Ca(2+) serves as cofactor.

It is found in the cytoplasm. In terms of biological role, exhibits lactonase activity. Acts in cells with perturbed membrane integrity and is possibly related to the membrane homeostasis. This is Lactonase drp35 (drp35) from Staphylococcus saprophyticus subsp. saprophyticus (strain ATCC 15305 / DSM 20229 / NCIMB 8711 / NCTC 7292 / S-41).